The following is a 158-amino-acid chain: Endoribonuclease YbeY (158 aa).

H122, H126, and H132 together coordinate Zn(2+).

The protein belongs to the endoribonuclease YbeY family. It depends on Zn(2+) as a cofactor.

It is found in the cytoplasm. Single strand-specific metallo-endoribonuclease involved in late-stage 70S ribosome quality control and in maturation of the 3' terminus of the 16S rRNA. The sequence is that of Endoribonuclease YbeY from Bacillus licheniformis (strain ATCC 14580 / DSM 13 / JCM 2505 / CCUG 7422 / NBRC 12200 / NCIMB 9375 / NCTC 10341 / NRRL NRS-1264 / Gibson 46).